Consider the following 226-residue polypeptide: uncharacterized protein (226 aa).

This is an uncharacterized protein from Mycobacterium bovis (strain ATCC BAA-935 / AF2122/97).